Reading from the N-terminus, the 310-residue chain is U-megalopygitoxin(8)-Mo15 (310 aa).

The signal sequence occupies residues 1–27; the sequence is MARFSSKNLTKLFQYLVLSLLSPVAFG.

The protein belongs to the megalysin family. In terms of processing, contains 3 disulfide bonds. Expressed by the venom apparatus.

The protein localises to the secreted. The protein resides in the target cell membrane. Its function is as follows. May function as a large pore-forming protein. The protein is U-megalopygitoxin(8)-Mo15 of Megalopyge opercularis (Southern flannel moth).